A 589-amino-acid chain; its full sequence is UvrABC system protein C (589 aa).

The GIY-YIG domain maps to 14–91 (HKPGCYLWKD…IAKYKPKYNM (78 aa)).

The protein belongs to the UvrC family. Interacts with UvrB in an incision complex.

The protein resides in the cytoplasm. Its function is as follows. The UvrABC repair system catalyzes the recognition and processing of DNA lesions. UvrC both incises the 5' and 3' sides of the lesion. The N-terminal half is responsible for the 3' incision and the C-terminal half is responsible for the 5' incision. This chain is UvrABC system protein C, found in Malacoplasma penetrans (strain HF-2) (Mycoplasma penetrans).